We begin with the raw amino-acid sequence, 352 residues long: Peptide chain release factor 1 (352 aa).

N5-methylglutamine is present on glutamine 229.

Belongs to the prokaryotic/mitochondrial release factor family. Post-translationally, methylated by PrmC. Methylation increases the termination efficiency of RF1.

It is found in the cytoplasm. Functionally, peptide chain release factor 1 directs the termination of translation in response to the peptide chain termination codons UAG and UAA. The polypeptide is Peptide chain release factor 1 (Acidiphilium cryptum (strain JF-5)).